The sequence spans 391 residues: 23S rRNA (uracil(747)-C(5))-methyltransferase RlmC (391 aa).

Residues cysteine 5, cysteine 13, cysteine 16, and cysteine 95 each coordinate [4Fe-4S] cluster. Residues glutamine 220, phenylalanine 249, glutamate 276, and asparagine 322 each coordinate S-adenosyl-L-methionine. The Nucleophile role is filled by cysteine 349.

This sequence belongs to the class I-like SAM-binding methyltransferase superfamily. RNA M5U methyltransferase family. RlmC subfamily.

The catalysed reaction is uridine(747) in 23S rRNA + S-adenosyl-L-methionine = 5-methyluridine(747) in 23S rRNA + S-adenosyl-L-homocysteine + H(+). Catalyzes the formation of 5-methyl-uridine at position 747 (m5U747) in 23S rRNA. In Actinobacillus pleuropneumoniae serotype 5b (strain L20), this protein is 23S rRNA (uracil(747)-C(5))-methyltransferase RlmC.